Here is a 203-residue protein sequence, read N- to C-terminus: Small ribosomal subunit protein uS4 (203 aa).

In terms of domain architecture, S4 RNA-binding spans 93–156; it reads RRLDNVVYRL…MKVPAILEAV (64 aa).

Belongs to the universal ribosomal protein uS4 family. In terms of assembly, part of the 30S ribosomal subunit. Contacts protein S5. The interaction surface between S4 and S5 is involved in control of translational fidelity.

Functionally, one of the primary rRNA binding proteins, it binds directly to 16S rRNA where it nucleates assembly of the body of the 30S subunit. With S5 and S12 plays an important role in translational accuracy. The protein is Small ribosomal subunit protein uS4 of Streptococcus agalactiae serotype Ia (strain ATCC 27591 / A909 / CDC SS700).